The sequence spans 417 residues: V-set and immunoglobulin domain-containing protein 8 (417 aa).

The first 21 residues, 1–21, serve as a signal peptide directing secretion; sequence MGVRGALHLLLVCLSPALLSA. Ig-like V-type domains lie at 22–140 and 145–256; these read VRIN…VIVT and PAVP…VKVS. Residues 22–262 lie on the Extracellular side of the membrane; that stretch reads VRINGDGQEV…VKVSDSQRVG (241 aa). 2 cysteine pairs are disulfide-bonded: Cys44–Cys125 and Cys166–Cys238. A helical membrane pass occupies residues 263-283; the sequence is MIVGAVLGSLLMLACLALGIW. Residues 284 to 417 are Cytoplasmic-facing; it reads GLICCCCGGG…QRSCKDGLLV (134 aa).

The protein resides in the membrane. This is V-set and immunoglobulin domain-containing protein 8 (Vsig8) from Mus musculus (Mouse).